Consider the following 238-residue polypeptide: Testis-specific gene A8 protein (238 aa).

The disordered stretch occupies residues 35 to 238 (GKGAKTNKRG…GEAVATTTMT (204 aa)). The segment covering 39–48 (KTNKRGKRGG) has biased composition (basic residues). Repeat copies occupy residues 79 to 93 (AAAA…PESS), 94 to 108 (AAAA…PESS), 109 to 123 (AAAA…PESS), 124 to 138 (AAAA…LESS), 153 to 158 (PAAPEA), 171 to 176 (PAAPEA), 180 to 185 (PAAPEA), and 189 to 194 (PAAPEA). The interval 79–148 (AAAAAPEAAA…AAAAAPEAAA (70 aa)) is 4 X 15 AA tandem repeats of A-A-A-A-A-P-E-A-A-A-S-[PL]-E-S-S. Low complexity-rich tracts occupy residues 79 to 200 (AAAA…AAPA) and 208 to 220 (WEAA…AAVK). Residues 153–194 (PAAPEAAAAPEVAAAPATPAAPEATAAPAAPEAATTPAAPEA) form a 4 X 6 AA repeats of P-A-A-P-E-A region.

Specifically expressed in testis (at protein level).

It localises to the cytoplasm. The protein localises to the nucleus. Its subcellular location is the nucleoplasm. The polypeptide is Testis-specific gene A8 protein (Mus musculus (Mouse)).